The sequence spans 231 residues: Large ribosomal subunit protein uL1 (231 aa).

The protein belongs to the universal ribosomal protein uL1 family. As to quaternary structure, part of the 50S ribosomal subunit.

In terms of biological role, binds directly to 23S rRNA. The L1 stalk is quite mobile in the ribosome, and is involved in E site tRNA release. Its function is as follows. Protein L1 is also a translational repressor protein, it controls the translation of the L11 operon by binding to its mRNA. The sequence is that of Large ribosomal subunit protein uL1 from Saccharophagus degradans (strain 2-40 / ATCC 43961 / DSM 17024).